The chain runs to 487 residues: 3-octaprenyl-4-hydroxybenzoate carboxy-lyase (487 aa).

Residue Asn-172 coordinates Mn(2+). Residues 175 to 177 (IYR), 189 to 191 (RWL), and 194 to 195 (RG) contribute to the prenylated FMN site. Glu-238 serves as a coordination point for Mn(2+). Asp-287 acts as the Proton donor in catalysis.

The protein belongs to the UbiD family. In terms of assembly, homohexamer. Prenylated FMN is required as a cofactor. It depends on Mn(2+) as a cofactor.

The protein resides in the cell membrane. It carries out the reaction a 4-hydroxy-3-(all-trans-polyprenyl)benzoate + H(+) = a 2-(all-trans-polyprenyl)phenol + CO2. It functions in the pathway cofactor biosynthesis; ubiquinone biosynthesis. Catalyzes the decarboxylation of 3-octaprenyl-4-hydroxy benzoate to 2-octaprenylphenol, an intermediate step in ubiquinone biosynthesis. This is 3-octaprenyl-4-hydroxybenzoate carboxy-lyase from Actinobacillus pleuropneumoniae serotype 5b (strain L20).